Here is a 205-residue protein sequence, read N- to C-terminus: ATP phosphoribosyltransferase (205 aa).

It belongs to the ATP phosphoribosyltransferase family. Short subfamily. Heteromultimer composed of HisG and HisZ subunits.

It is found in the cytoplasm. The enzyme catalyses 1-(5-phospho-beta-D-ribosyl)-ATP + diphosphate = 5-phospho-alpha-D-ribose 1-diphosphate + ATP. It functions in the pathway amino-acid biosynthesis; L-histidine biosynthesis; L-histidine from 5-phospho-alpha-D-ribose 1-diphosphate: step 1/9. Catalyzes the condensation of ATP and 5-phosphoribose 1-diphosphate to form N'-(5'-phosphoribosyl)-ATP (PR-ATP). Has a crucial role in the pathway because the rate of histidine biosynthesis seems to be controlled primarily by regulation of HisG enzymatic activity. This is ATP phosphoribosyltransferase from Leptospira interrogans serogroup Icterohaemorrhagiae serovar Lai (strain 56601).